A 520-amino-acid chain; its full sequence is MESSISQTLSKLSDPTTSLVIVVSLFIFISFITRRRRPPYPPGPRGWPIIGNMLMMDQLTHRGLANLAKKYGGLCHLRMGFLHMYAVSSPEVARQVLQVQDSVFSNRPATIAISYLTYDRADMAFAHYGPFWRQMRKVCVMKVFSRKRAESWASVRDEVDKMVRSVSCNVGKPINVGEQIFALTRNITYRAAFGSACEKGQDEFIRILQEFSKLFGAFNVADFIPYFGWIDPQGINKRLVKARNDLDGFIDDIIDEHMKKKENQNAVDDGDVVDTDMVDDLLAFYSEEAKLVSETADLQNSIKLTRDNIKAIIMDVMFGGTETVASAIEWALTELLRSPEDLKRVQQELAEVVGLDRRVEESDIEKLTYLKCTLKETLRMHPPIPLLLHETAEDTSIDGFFIPKKSRVMINAFAIGRDPTSWTDPDTFRPSRFLEPGVPDFKGSNFEFIPFGSGRRSCPGMQLGLYALDLAVAHILHCFTWKLPDGMKPSELDMNDVFGLTAPKATRLFAVPTTRLICAL.

At Met-1 the chain carries N-acetylmethionine. A helical membrane pass occupies residues 12-32 (LSDPTTSLVIVVSLFIFISFI). A heme-binding site is contributed by Cys-458.

This sequence belongs to the cytochrome P450 family. Requires heme as cofactor.

It is found in the membrane. It participates in aromatic compound metabolism; phenylpropanoid biosynthesis. The sequence is that of Cytochrome P450 84A1 (CYP84A1) from Arabidopsis thaliana (Mouse-ear cress).